A 92-amino-acid polypeptide reads, in one-letter code: Nodulation protein F (92 aa).

Residues 4-88 form the Carrier domain; it reads QLTLEIISAI…DVVEAVRGLL (85 aa). Ser45 bears the O-(pantetheine 4'-phosphoryl)serine mark.

Post-translationally, 4'-phosphopantetheine is transferred from CoA to a specific serine of apo-NodF.

Functionally, proposed to synthesize nod factor fatty acyl chain. Involved in trans-2,trans-4,trans-6,cis-11-octadecatetraenoic acid biosynthesis. The chain is Nodulation protein F (nodF) from Rhizobium leguminosarum bv. viciae.